The chain runs to 511 residues: Bifunctional purine biosynthesis protein PurH (511 aa).

The region spanning 1-145 (MKQRALVSVS…KNHKFVSVIV (145 aa)) is the MGS-like domain.

Belongs to the PurH family.

It catalyses the reaction (6R)-10-formyltetrahydrofolate + 5-amino-1-(5-phospho-beta-D-ribosyl)imidazole-4-carboxamide = 5-formamido-1-(5-phospho-D-ribosyl)imidazole-4-carboxamide + (6S)-5,6,7,8-tetrahydrofolate. The catalysed reaction is IMP + H2O = 5-formamido-1-(5-phospho-D-ribosyl)imidazole-4-carboxamide. It participates in purine metabolism; IMP biosynthesis via de novo pathway; 5-formamido-1-(5-phospho-D-ribosyl)imidazole-4-carboxamide from 5-amino-1-(5-phospho-D-ribosyl)imidazole-4-carboxamide (10-formyl THF route): step 1/1. The protein operates within purine metabolism; IMP biosynthesis via de novo pathway; IMP from 5-formamido-1-(5-phospho-D-ribosyl)imidazole-4-carboxamide: step 1/1. The sequence is that of Bifunctional purine biosynthesis protein PurH from Bacillus cereus (strain AH187).